A 540-amino-acid chain; its full sequence is MAGPSNQTQPPPPVLTQPSLSFTQGLLVGQLSVVLLIGAFIKFFIFGEAPPHPSRNGLSNRTSSHRRSYSLNSISADSSPRTLREKPSTSNILRPVPSSSTNTRSILRKTYYSATPTNPTSKHSRSRPHHSSHQPESLDWFNVLIAQTIAQYRQTAYILKDSPTSSILASLSEALNNPEKKPSFIDSIKVTDISLGEEFPIFSNCRVIAVEDPNSDGGRLQALMDVDLSDDNLSLAVETSLLLNYPKPFSAVLPVALAVSVVRFSGTLCISFVPGPGTSDQTMSPSPSPPKEASAENIAVDHQSPERQSARQRAPHQHKYTNTNTAGATAAATADDNDTHAKLPHGIPKTSLAFSFLPDYRLDLSVRSLIGSRSRLQDVPKVAQLVEARVQAWFEERVVEPRVQVVGLPNIWPRMGRTGVRGSQEETEAGAGGSAPADIPGTAGGDGVGVRGGGGGGGGGGGVGGSGGGSMRGTSGWGMGYDGLRYRHNAHGDGGVGAGPGQSAGAALYGGAQGGGGGGGRGGEEQFAIPGSMPDPVVVT.

Over 1-25 (MAGPSNQTQPPPPVLTQPSLSFTQG) the chain is Lumenal. Residues 26-46 (LLVGQLSVVLLIGAFIKFFIF) traverse the membrane as a helical segment. Topologically, residues 47-540 (GEAPPHPSRN…GSMPDPVVVT (494 aa)) are cytoplasmic. Disordered regions lie at residues 52 to 135 (HPSR…SHQP), 275 to 331 (GPGT…ATAA), 416 to 471 (GRTG…GGSM), and 509 to 540 (YGGAQGGGGGGGRGGEEQFAIPGSMPDPVVVT). Polar residues-rich tracts occupy residues 69 to 81 (YSLNSISADSSPR), 88 to 105 (STSNILRPVPSSSTNTRS), and 112 to 121 (YSATPTNPTS). Residues 122-132 (KHSRSRPHHSS) are compositionally biased toward basic residues. Residues 134 to 409 (QPESLDWFNV…EPRVQVVGLP (276 aa)) enclose the SMP-LTD domain. Low complexity predominate over residues 321-331 (TNTNTAGATAA). Composition is skewed to gly residues over residues 442 to 471 (TAGGDGVGVRGGGGGGGGGGGVGGSGGGSM) and 511 to 521 (GAQGGGGGGGR).

The protein belongs to the MMM1 family. In terms of assembly, homodimer. Component of the ER-mitochondria encounter structure (ERMES) or MDM complex, composed of MMM1, MDM10, MDM12 and MDM34. An MMM1 homodimer associates with one molecule of MDM12 on each side in a pairwise head-to-tail manner, and the SMP-LTD domains of MMM1 and MDM12 generate a continuous hydrophobic tunnel for phospholipid trafficking.

It localises to the endoplasmic reticulum membrane. Its function is as follows. Component of the ERMES/MDM complex, which serves as a molecular tether to connect the endoplasmic reticulum (ER) and mitochondria. Components of this complex are involved in the control of mitochondrial shape and protein biogenesis, and function in nonvesicular lipid trafficking between the ER and mitochondria. The MDM12-MMM1 subcomplex functions in the major beta-barrel assembly pathway that is responsible for biogenesis of all outer membrane beta-barrel proteins, and acts in a late step after the SAM complex. The MDM10-MDM12-MMM1 subcomplex further acts in the TOM40-specific pathway after the action of the MDM12-MMM1 complex. Essential for establishing and maintaining the structure of mitochondria and maintenance of mtDNA nucleoids. This Blastomyces gilchristii (strain SLH14081) (Blastomyces dermatitidis) protein is Maintenance of mitochondrial morphology protein 1.